Here is a 233-residue protein sequence, read N- to C-terminus: Small ribosomal subunit protein uS2 (233 aa).

Belongs to the universal ribosomal protein uS2 family.

The chain is Small ribosomal subunit protein uS2 from Bacillus cereus (strain G9842).